The following is a 127-amino-acid chain: Phosphoribosyl-AMP cyclohydrolase (127 aa).

Asp75 provides a ligand contact to Mg(2+). Position 76 (Cys76) interacts with Zn(2+). Asp77 and Asp79 together coordinate Mg(2+). 2 residues coordinate Zn(2+): Cys93 and Cys100.

The protein belongs to the PRA-CH family. As to quaternary structure, homodimer. The cofactor is Mg(2+). It depends on Zn(2+) as a cofactor.

It is found in the cytoplasm. It catalyses the reaction 1-(5-phospho-beta-D-ribosyl)-5'-AMP + H2O = 1-(5-phospho-beta-D-ribosyl)-5-[(5-phospho-beta-D-ribosylamino)methylideneamino]imidazole-4-carboxamide. The protein operates within amino-acid biosynthesis; L-histidine biosynthesis; L-histidine from 5-phospho-alpha-D-ribose 1-diphosphate: step 3/9. Functionally, catalyzes the hydrolysis of the adenine ring of phosphoribosyl-AMP. The chain is Phosphoribosyl-AMP cyclohydrolase from Desulfotalea psychrophila (strain LSv54 / DSM 12343).